We begin with the raw amino-acid sequence, 220 residues long: MTQDEMKKAAGWAALKYVEEGSIVGVGTGSTVNHFIDALATMKDDIEGAVSSSEASTQKMKALGIPVYDLNSVDRLSVYVDGADEINDRMDMIKGGGAALTREKIVAAVAEKFICIVDNTKQVNILGEFPLPVEVIPMARSYVARQLVKLGGDPVYREGVVTDNGNVILDVYNLKILNPKELESQINEIVGVVTNGLFAKRGADVLLVGTPDGVKTFTAK.

Substrate contacts are provided by residues T28–T31, D81–D84, and K94–G97. The active-site Proton acceptor is E103. Residue K121 coordinates substrate.

Belongs to the ribose 5-phosphate isomerase family. As to quaternary structure, homodimer.

It catalyses the reaction aldehydo-D-ribose 5-phosphate = D-ribulose 5-phosphate. Its pathway is carbohydrate degradation; pentose phosphate pathway; D-ribose 5-phosphate from D-ribulose 5-phosphate (non-oxidative stage): step 1/1. Its function is as follows. Catalyzes the reversible conversion of ribose-5-phosphate to ribulose 5-phosphate. This Shewanella putrefaciens (strain CN-32 / ATCC BAA-453) protein is Ribose-5-phosphate isomerase A.